The primary structure comprises 408 residues: Solute carrier family 35 member F1 (408 aa).

Positions 1–21 are disordered; the sequence is MIPPEQPQQQLQPPSPAPPNH. The next 10 helical transmembrane spans lie at 60-80, 94-114, 129-147, 158-178, 186-206, 221-241, 247-267, 284-304, 311-331, and 335-355; these read MLIS…IGLT, VFQS…TLAV, WWKY…YLVV, IQLL…FFLL, FIGI…DVLV, LLVL…EYII, VEFL…QLAI, LLYV…PVVI, SVNL…LFLF, and FSGL…LYSS.

The protein belongs to the SLC35F solute transporter family.

It localises to the cytoplasmic vesicle. Its subcellular location is the secretory vesicle. The protein resides in the synaptic vesicle membrane. In terms of biological role, putative solute transporter. The sequence is that of Solute carrier family 35 member F1 (SLC35F1) from Homo sapiens (Human).